The following is a 93-amino-acid chain: SH3 domain-binding glutamic acid-rich-like protein 3 (93 aa).

An N-acetylserine modification is found at S2. The O-linked (GalNAc...) serine glycan is linked to S2. Positions 2–93 constitute a Glutaredoxin domain; it reads SGRRVYSTSV…NTLQEFLKLA (92 aa). O-linked (GalNAc...) threonine glycosylation is found at T9 and T12.

It belongs to the SH3BGR family. In terms of assembly, homodimer. Interacts with MYO1C (via its IQ motifs); the interaction is dependent on calcium and takes place at membrane ruffles. May be glycosylated.

The protein resides in the cytoplasm. The protein localises to the cytosol. It localises to the cell projection. Its subcellular location is the ruffle membrane. It is found in the nucleus. Could act as a modulator of glutaredoxin biological activity. May play a role in cytoskeleton organization. This chain is SH3 domain-binding glutamic acid-rich-like protein 3 (SH3BGRL3), found in Pongo abelii (Sumatran orangutan).